Reading from the N-terminus, the 352-residue chain is DNA polymerase IV (352 aa).

The UmuC domain maps to I4–G185. Mg(2+)-binding residues include D8 and D103. Residue E104 is part of the active site.

The protein belongs to the DNA polymerase type-Y family. In terms of assembly, monomer. Mg(2+) serves as cofactor.

It localises to the cytoplasm. The enzyme catalyses DNA(n) + a 2'-deoxyribonucleoside 5'-triphosphate = DNA(n+1) + diphosphate. Its function is as follows. Poorly processive, error-prone DNA polymerase involved in untargeted mutagenesis. Copies undamaged DNA at stalled replication forks, which arise in vivo from mismatched or misaligned primer ends. These misaligned primers can be extended by PolIV. Exhibits no 3'-5' exonuclease (proofreading) activity. May be involved in translesional synthesis, in conjunction with the beta clamp from PolIII. The polypeptide is DNA polymerase IV (Yersinia pseudotuberculosis serotype O:1b (strain IP 31758)).